Here is a 484-residue protein sequence, read N- to C-terminus: Serine hydroxymethyltransferase, cytosolic (484 aa).

A2 carries the post-translational modification N-acetylalanine. The residue at position 6 (N6) is a Deamidated asparagine; alternate. The segment at residues 6-7 is a cross-link (isoaspartyl glycine isopeptide (Asn-Gly); alternate); the sequence is NG. C204 (nucleophile) is an active-site residue. H256 functions as the Proton donor in the catalytic mechanism. An N6-(pyridoxal phosphate)lysine modification is found at K257.

Belongs to the SHMT family. Homotetramer. Identified in complex with ABRAXAS2 and the other subunits of the BRISC complex, at least composed of ABRAXAS2, BRCC3/BRCC36, BABAM2 and BABAM1/NBA1. It depends on pyridoxal 5'-phosphate as a cofactor. Deamidation of asparagine produces alternatively aspartate or isoaspartate, which in turn can be converted to aspartate through carboxylmethylation/demethylation.

The protein localises to the cytoplasm. It catalyses the reaction (6R)-5,10-methylene-5,6,7,8-tetrahydrofolate + glycine + H2O = (6S)-5,6,7,8-tetrahydrofolate + L-serine. The protein operates within one-carbon metabolism; tetrahydrofolate interconversion. Its function is as follows. Interconversion of serine and glycine. The polypeptide is Serine hydroxymethyltransferase, cytosolic (SHMT1) (Oryctolagus cuniculus (Rabbit)).